Consider the following 134-residue polypeptide: Small ribosomal subunit protein uS8c (134 aa).

The protein belongs to the universal ribosomal protein uS8 family. Part of the 30S ribosomal subunit.

It localises to the plastid. Functionally, one of the primary rRNA binding proteins, it binds directly to 16S rRNA central domain where it helps coordinate assembly of the platform of the 30S subunit. The chain is Small ribosomal subunit protein uS8c (rps8) from Cuscuta reflexa (Southern Asian dodder).